The following is a 529-amino-acid chain: Keratin, type II cytoskeletal 74 (529 aa).

Residues 1 to 139 (MSRQLNIKSS…DPEIQKVRAQ (139 aa)) form a head region. The coil 1A stretch occupies residues 140–175 (EREQIKVLNDKFASFIDKVRFLEQQNQVLETKWELL). The 314-residue stretch at 140-453 (EREQIKVLND…KLLEGEECRM (314 aa)) folds into the IF rod domain. The segment at 176-194 (QQLDLNNCKKNLEPILEGY) is linker 1. The coil 1B stretch occupies residues 195 to 286 (ISNLRKQLET…CLYDAEIAQI (92 aa)). Positions 287–310 (QTHASETSVILSMDNNRDLDLDSI) are linker 12. Positions 311 to 449 (IAEVRMHYEE…ATYRKLLEGE (139 aa)) are coil 2. The interval 450–529 (ECRMSGENPS…ASIPARKATR (80 aa)) is tail. A compositionally biased stretch (low complexity) spans 484-500 (GASAVAGSSGSTQSGQT). The segment at 484–529 (GASAVAGSSGSTQSGQTKTTEARGGDLKDTQGKSTPASIPARKATR) is disordered. Positions 503–514 (TEARGGDLKDTQ) are enriched in basic and acidic residues. The residue at position 513 (threonine 513) is a Phosphothreonine.

The protein belongs to the intermediate filament family. Heterotetramer of two type I and two type II keratins. As to expression, highly expressed in hair follicles from scalp. In hair, it is specifically present in the inner root sheath (IRS) of the hair follicle. Present in the IRS Huxley layer, but not in Henle layer or cuticle of the IRS. In the IRS Huxley layer, it is expressed in specialized Huxley cells, termed 'Fluegelzellen, along the area of differentiated Henle cells (at protein level).

In terms of biological role, has a role in hair formation. Specific component of keratin intermediate filaments in the inner root sheath (IRS) of the hair follicle. This chain is Keratin, type II cytoskeletal 74 (KRT74), found in Homo sapiens (Human).